The sequence spans 292 residues: 1D-myo-inositol 2-acetamido-2-deoxy-alpha-D-glucopyranoside deacetylase (292 aa).

3 residues coordinate Zn(2+): His12, Asp15, and His147.

The protein belongs to the MshB deacetylase family. The cofactor is Zn(2+).

It carries out the reaction 1D-myo-inositol 2-acetamido-2-deoxy-alpha-D-glucopyranoside + H2O = 1D-myo-inositol 2-amino-2-deoxy-alpha-D-glucopyranoside + acetate. Functionally, catalyzes the deacetylation of 1D-myo-inositol 2-acetamido-2-deoxy-alpha-D-glucopyranoside (GlcNAc-Ins) in the mycothiol biosynthesis pathway. This is 1D-myo-inositol 2-acetamido-2-deoxy-alpha-D-glucopyranoside deacetylase from Rhodococcus jostii (strain RHA1).